The following is a 251-amino-acid chain: Triosephosphate isomerase (251 aa).

Residue 9–11 participates in substrate binding; it reads NWK. The active-site Electrophile is the His95. Glu167 functions as the Proton acceptor in the catalytic mechanism. Substrate-binding positions include Gly173, Ser213, and 234-235; that span reads GG.

This sequence belongs to the triosephosphate isomerase family. In terms of assembly, homodimer.

It is found in the cytoplasm. The catalysed reaction is D-glyceraldehyde 3-phosphate = dihydroxyacetone phosphate. It participates in carbohydrate biosynthesis; gluconeogenesis. Its pathway is carbohydrate degradation; glycolysis; D-glyceraldehyde 3-phosphate from glycerone phosphate: step 1/1. In terms of biological role, involved in the gluconeogenesis. Catalyzes stereospecifically the conversion of dihydroxyacetone phosphate (DHAP) to D-glyceraldehyde-3-phosphate (G3P). The chain is Triosephosphate isomerase from Carboxydothermus hydrogenoformans (strain ATCC BAA-161 / DSM 6008 / Z-2901).